Here is a 503-residue protein sequence, read N- to C-terminus: Discoidin, CUB and LCCL domain-containing protein 1 (503 aa).

The first 25 residues, 1 to 25, serve as a signal peptide directing secretion; that stretch reads MGTGAGGPSVLALLFAVCAPLRLQA. At 26 to 250 the chain is on the extracellular side; that stretch reads EELGDGCGHI…FTTPGMNITT (225 aa). 4 disulfides stabilise this stretch: cysteine 32/cysteine 59, cysteine 85/cysteine 103, cysteine 149/cysteine 165, and cysteine 169/cysteine 191. Residues 32–141 enclose the CUB domain; the sequence is CGHIVTSQDS…RGFLLTYASS (110 aa). N-linked (GlcNAc...) asparagine glycosylation is present at asparagine 55. Residues 143-239 enclose the LCCL domain; it reads HPDLITCLER…RHGSLSEKRF (97 aa). A glycan (N-linked (GlcNAc...) asparagine) is linked at asparagine 247. A helical transmembrane segment spans residues 251-271; sequence VAIPSVIFIALLLTGMGIFAI. Over 272–503 the chain is Cytoplasmic; sequence CRKRKKKGNP…LNQTAMTALL (232 aa). Serine 305 is modified (phosphoserine). Position 406 is a phosphothreonine (threonine 406). The disordered stretch occupies residues 410–503; sequence QSGYRVPGPR…LNQTAMTALL (94 aa). A compositionally biased stretch (polar residues) spans 494 to 503; it reads LNQTAMTALL.

The protein resides in the membrane. The polypeptide is Discoidin, CUB and LCCL domain-containing protein 1 (Dcbld1) (Mus musculus (Mouse)).